The chain runs to 349 residues: DNA replication and repair protein RecF (349 aa).

An ATP-binding site is contributed by 30–37 (GKNGSGKT).

Belongs to the RecF family.

It is found in the cytoplasm. Its function is as follows. The RecF protein is involved in DNA metabolism; it is required for DNA replication and normal SOS inducibility. RecF binds preferentially to single-stranded, linear DNA. It also seems to bind ATP. The polypeptide is DNA replication and repair protein RecF (Francisella tularensis subsp. holarctica (strain FTNF002-00 / FTA)).